Consider the following 187-residue polypeptide: Orotate phosphoribosyltransferase (187 aa).

5-phospho-alpha-D-ribose 1-diphosphate contacts are provided by residues Arg98, Lys99, Lys102, His104, and 128 to 136 (EDVTTTGGS). Residues Thr132 and Arg160 each coordinate orotate.

The protein belongs to the purine/pyrimidine phosphoribosyltransferase family. PyrE subfamily. In terms of assembly, homodimer. It depends on Mg(2+) as a cofactor.

The catalysed reaction is orotidine 5'-phosphate + diphosphate = orotate + 5-phospho-alpha-D-ribose 1-diphosphate. It participates in pyrimidine metabolism; UMP biosynthesis via de novo pathway; UMP from orotate: step 1/2. In terms of biological role, catalyzes the transfer of a ribosyl phosphate group from 5-phosphoribose 1-diphosphate to orotate, leading to the formation of orotidine monophosphate (OMP). This is Orotate phosphoribosyltransferase from Rhodopseudomonas palustris (strain BisB5).